Here is a 231-residue protein sequence, read N- to C-terminus: MSKLITTEPLKSMAEVISNYAMKQQSVSERNIPKKQSLLRKEITYETEVQTSADSIWNVYSSPDIPRLLRDVLLPGVFEKLDVIAGNGGVGTVLDIAFPLGAVPRRYKEKFVKINHEKRLKEVVMIEGGYLDMGCTFYMDRIHIFEKTPNSCVIESSIIYEVKEEYAGKMAKLITTEPLESMAEVISGYVLKKRLQVFGFEIKPKLRFNLLLCLIICLVIAGGMFVAGVPL.

107 to 109 (YKE) lines the dopamine pocket. K121 functions as the Proton donor in the catalytic mechanism. D140 provides a ligand contact to (4-hydroxyphenyl)acetaldehyde. The chain crosses the membrane as a helical span at residues 210 to 230 (LLLCLIICLVIAGGMFVAGVP).

The protein belongs to the BetVI family. In terms of tissue distribution, detected in roots, stems, leaves, flower buds and germinating seeds.

It localises to the membrane. The enzyme catalyses (4-hydroxyphenyl)acetaldehyde + dopamine = (S)-norcoclaurine + H2O. It participates in alkaloid biosynthesis; (S)-reticuline biosynthesis. Activity doubles within 5 hours of elicitor treatment and continues to increase for at least 80 hours. In terms of biological role, involved in the biosynthesis of (S)-coclaurine, the common precursor of all benzylisoquinoline alkaloids such as morphine, sanguinarine, codeine or papaverine. Condenses dopamine and 4-hydroxyphenylacetaldehyde. The protein is S-norcoclaurine synthase 1 of Papaver somniferum (Opium poppy).